Here is a 270-residue protein sequence, read N- to C-terminus: tRNA pseudouridine synthase A (270 aa).

The active-site Nucleophile is Asp-51. Residue Tyr-109 coordinates substrate.

Belongs to the tRNA pseudouridine synthase TruA family. As to quaternary structure, homodimer.

The enzyme catalyses uridine(38/39/40) in tRNA = pseudouridine(38/39/40) in tRNA. Functionally, formation of pseudouridine at positions 38, 39 and 40 in the anticodon stem and loop of transfer RNAs. In Burkholderia lata (strain ATCC 17760 / DSM 23089 / LMG 22485 / NCIMB 9086 / R18194 / 383), this protein is tRNA pseudouridine synthase A.